We begin with the raw amino-acid sequence, 348 residues long: Dihydroorotase (348 aa).

Zn(2+) contacts are provided by His17 and His19. Substrate is bound by residues 19 to 21 and Asn45; that span reads HLR. Positions 103, 140, and 178 each coordinate Zn(2+). N6-carboxylysine is present on Lys103. His140 is a substrate binding site. Substrate is bound at residue Leu223. A Zn(2+)-binding site is contributed by Asp251. Asp251 is an active-site residue. 2 residues coordinate substrate: His255 and Ala267.

It belongs to the metallo-dependent hydrolases superfamily. DHOase family. Class II DHOase subfamily. In terms of assembly, homodimer. Zn(2+) serves as cofactor.

It catalyses the reaction (S)-dihydroorotate + H2O = N-carbamoyl-L-aspartate + H(+). It functions in the pathway pyrimidine metabolism; UMP biosynthesis via de novo pathway; (S)-dihydroorotate from bicarbonate: step 3/3. Functionally, catalyzes the reversible cyclization of carbamoyl aspartate to dihydroorotate. This Salmonella typhimurium (strain LT2 / SGSC1412 / ATCC 700720) protein is Dihydroorotase.